Reading from the N-terminus, the 525-residue chain is Bifunctional purine biosynthesis protein PurH (525 aa).

Residues 1 to 149 (MSDPVIKRAL…KNHESVTVIT (149 aa)) form the MGS-like domain.

The protein belongs to the PurH family.

It catalyses the reaction (6R)-10-formyltetrahydrofolate + 5-amino-1-(5-phospho-beta-D-ribosyl)imidazole-4-carboxamide = 5-formamido-1-(5-phospho-D-ribosyl)imidazole-4-carboxamide + (6S)-5,6,7,8-tetrahydrofolate. The enzyme catalyses IMP + H2O = 5-formamido-1-(5-phospho-D-ribosyl)imidazole-4-carboxamide. It functions in the pathway purine metabolism; IMP biosynthesis via de novo pathway; 5-formamido-1-(5-phospho-D-ribosyl)imidazole-4-carboxamide from 5-amino-1-(5-phospho-D-ribosyl)imidazole-4-carboxamide (10-formyl THF route): step 1/1. The protein operates within purine metabolism; IMP biosynthesis via de novo pathway; IMP from 5-formamido-1-(5-phospho-D-ribosyl)imidazole-4-carboxamide: step 1/1. The polypeptide is Bifunctional purine biosynthesis protein PurH (Chlorobium phaeobacteroides (strain BS1)).